A 208-amino-acid polypeptide reads, in one-letter code: Pyridoxine/pyridoxamine 5'-phosphate oxidase (208 aa).

FMN is bound by residues arginine 53–lysine 58, tyrosine 68–serine 69, lysine 75, and glutamine 100. Lysine 58 is a substrate binding site. Residues tyrosine 118, arginine 122, and serine 126 each coordinate substrate. Residues glutamine 135–serine 136 and tryptophan 180 contribute to the FMN site. Residue arginine 186 to histidine 188 coordinates substrate. Arginine 190 is a binding site for FMN.

The protein belongs to the pyridoxamine 5'-phosphate oxidase family. Homodimer. FMN is required as a cofactor.

The enzyme catalyses pyridoxamine 5'-phosphate + O2 + H2O = pyridoxal 5'-phosphate + H2O2 + NH4(+). It catalyses the reaction pyridoxine 5'-phosphate + O2 = pyridoxal 5'-phosphate + H2O2. It functions in the pathway cofactor metabolism; pyridoxal 5'-phosphate salvage; pyridoxal 5'-phosphate from pyridoxamine 5'-phosphate: step 1/1. It participates in cofactor metabolism; pyridoxal 5'-phosphate salvage; pyridoxal 5'-phosphate from pyridoxine 5'-phosphate: step 1/1. Its function is as follows. Catalyzes the oxidation of either pyridoxine 5'-phosphate (PNP) or pyridoxamine 5'-phosphate (PMP) into pyridoxal 5'-phosphate (PLP). This chain is Pyridoxine/pyridoxamine 5'-phosphate oxidase, found in Xylella fastidiosa (strain Temecula1 / ATCC 700964).